Consider the following 215-residue polypeptide: Ribonuclease HII (215 aa).

In terms of domain architecture, RNase H type-2 spans 19-214; it reads KNVIGVDEAG…KILETEEEKT (196 aa). 3 residues coordinate a divalent metal cation: Asp25, Glu26, and Asp121.

Belongs to the RNase HII family. Mn(2+) serves as cofactor. Requires Mg(2+) as cofactor.

The protein resides in the cytoplasm. It catalyses the reaction Endonucleolytic cleavage to 5'-phosphomonoester.. In terms of biological role, endonuclease that specifically degrades the RNA of RNA-DNA hybrids. In Fusobacterium nucleatum subsp. nucleatum (strain ATCC 25586 / DSM 15643 / BCRC 10681 / CIP 101130 / JCM 8532 / KCTC 2640 / LMG 13131 / VPI 4355), this protein is Ribonuclease HII.